A 199-amino-acid chain; its full sequence is Probable cobalt-precorrin-6B C(15)-methyltransferase (decarboxylating) (199 aa).

S-adenosyl-L-methionine is bound by residues T24, G48 to G52, D72, and A101.

Belongs to the methyltransferase superfamily. Archaeal-type CbiT family.

The catalysed reaction is Co-precorrin-6B + S-adenosyl-L-methionine = Co-precorrin-7 + S-adenosyl-L-homocysteine + CO2. It functions in the pathway cofactor biosynthesis; adenosylcobalamin biosynthesis; cob(II)yrinate a,c-diamide from sirohydrochlorin (anaerobic route): step 8/10. In terms of biological role, catalyzes the methylation of C-15 in cobalt-precorrin-6B followed by the decarboxylation of C-12 to form cobalt-precorrin-7. The protein is Probable cobalt-precorrin-6B C(15)-methyltransferase (decarboxylating) of Saccharolobus islandicus (strain Y.N.15.51 / Yellowstone #2) (Sulfolobus islandicus).